Here is a 240-residue protein sequence, read N- to C-terminus: MIIFPAIDILDGKCVRLFKGDFNKTTVYENDPVKTAKDFESQGSKYLHIVDLDGAKNPLNRQSEIIKRIALETELNIQTGGGIRSEEQIKDYLDNGVSSVIVGSMAAVEPEKAKGWIKTFGKERIVLSLDVNIVNNEPFVAAYGWQGSSGKNLFDLINGYTLQGLRVLCTDISRDGALQGPNIDLYKNVLNKCPGVELQASGGVAGLNDLIKLKETGVHGVIVGKALYERKFTLREALSI.

The Proton acceptor role is filled by Asp8. The Proton donor role is filled by Asp130.

It belongs to the HisA/HisF family.

The protein localises to the cytoplasm. It catalyses the reaction 1-(5-phospho-beta-D-ribosyl)-5-[(5-phospho-beta-D-ribosylamino)methylideneamino]imidazole-4-carboxamide = 5-[(5-phospho-1-deoxy-D-ribulos-1-ylimino)methylamino]-1-(5-phospho-beta-D-ribosyl)imidazole-4-carboxamide. It participates in amino-acid biosynthesis; L-histidine biosynthesis; L-histidine from 5-phospho-alpha-D-ribose 1-diphosphate: step 4/9. The polypeptide is 1-(5-phosphoribosyl)-5-[(5-phosphoribosylamino)methylideneamino] imidazole-4-carboxamide isomerase (Elusimicrobium minutum (strain Pei191)).